Here is a 282-residue protein sequence, read N- to C-terminus: Biotin synthase (282 aa).

The 228-residue stretch at 1–228 (MQEIFLCSIS…NARLMVAGGR (228 aa)) folds into the Radical SAM core domain. [4Fe-4S] cluster-binding residues include cysteine 17, cysteine 21, and cysteine 24. 4 residues coordinate [2Fe-2S] cluster: cysteine 61, cysteine 96, cysteine 154, and arginine 221.

It belongs to the radical SAM superfamily. Biotin synthase family. As to quaternary structure, homodimer. The cofactor is [4Fe-4S] cluster. Requires [2Fe-2S] cluster as cofactor.

The enzyme catalyses (4R,5S)-dethiobiotin + (sulfur carrier)-SH + 2 reduced [2Fe-2S]-[ferredoxin] + 2 S-adenosyl-L-methionine = (sulfur carrier)-H + biotin + 2 5'-deoxyadenosine + 2 L-methionine + 2 oxidized [2Fe-2S]-[ferredoxin]. It functions in the pathway cofactor biosynthesis; biotin biosynthesis; biotin from 7,8-diaminononanoate: step 2/2. Its function is as follows. Catalyzes the conversion of dethiobiotin (DTB) to biotin by the insertion of a sulfur atom into dethiobiotin via a radical-based mechanism. This Helicobacter pylori (strain G27) protein is Biotin synthase.